The primary structure comprises 350 residues: Autophagy-related protein 3 (350 aa).

The flexible region stretch occupies residues 85 to 166 (NFAGDAGLEE…EEDDEAIIRD (82 aa)). A disordered region spans residues 97–171 (VDDGDEFKGS…AIIRDTDASG (75 aa)). Over residues 102-113 (EFKGSKGDDDGW) the composition is skewed to basic and acidic residues. Residues 146–161 (DDDDDIPDMEDEEDDE) are compositionally biased toward acidic residues. Cys-244 functions as the Glycyl thioester intermediate in the catalytic mechanism. Residues 248 to 326 (PVMKTLLDRA…DQEVAIRVDQ (79 aa)) form a handle region region. Lys-262 and Lys-267 each carry N6-acetyllysine.

Belongs to the ATG3 family. In terms of assembly, monomer. Interacts with ATG8 through an intermediate thioester bond through the C-terminal Gly of ATG8. Also interacts with the 40 amino acid C-terminal region of the E1-like ATG7 enzyme. Also interacts with the ATG12-ATG5 conjugate. Interacts with HAT1. In terms of processing, acetylated by HAT1 at Lys-262 and Lys-267, which affects the interaction with ATG8 and prevents autophagy during both appressorium development and nutrient starvation.

It is found in the preautophagosomal structure. The protein resides in the cytoplasm. In terms of biological role, E2 conjugating enzyme required for the cytoplasm to vacuole transport (Cvt) and autophagy. Required for selective autophagic degradation of the nucleus (nucleophagy) as well as for mitophagy which contributes to regulate mitochondrial quantity and quality by eliminating the mitochondria to a basal level to fulfill cellular energy requirements and preventing excess ROS production. Responsible for the E2-like covalent binding of phosphatidylethanolamine to the C-terminal Gly of ATG8. The ATG12-ATG5 conjugate plays a role of an E3 and promotes the transfer of ATG8 from ATG3 to phosphatidylethanolamine (PE). This step is required for the membrane association of ATG8. The formation of the ATG8-phosphatidylethanolamine conjugate is essential for autophagy and for the cytoplasm to vacuole transport (Cvt). The ATG8-PE conjugate mediates tethering between adjacent membranes and stimulates membrane hemifusion, leading to expansion of the autophagosomal membrane during autophagy. Plays a role in appressorium formation and pathogenicity. The chain is Autophagy-related protein 3 from Pyricularia oryzae (strain 70-15 / ATCC MYA-4617 / FGSC 8958) (Rice blast fungus).